A 447-amino-acid polypeptide reads, in one-letter code: Probable ribonuclease FAU-1 (447 aa).

Positions 424-447 are disordered; sequence PEAPGGKICTPEGLTSAPPRSSSA.

The protein belongs to the FAU-1 family.

Probable RNase involved in rRNA stability through maturation and/or degradation of precursor rRNAs. Binds to RNA in loop regions with AU-rich sequences. The protein is Probable ribonuclease FAU-1 of Pyrobaculum neutrophilum (strain DSM 2338 / JCM 9278 / NBRC 100436 / V24Sta) (Thermoproteus neutrophilus).